Here is a 490-residue protein sequence, read N- to C-terminus: Homoserine O-acetyltransferase (490 aa).

An AB hydrolase-1 domain is found at Asn-47–Glu-355. Ser-152 (nucleophile) is an active-site residue. A substrate-binding site is contributed by Arg-222. Residues Asp-316 and His-349 contribute to the active site. A substrate-binding site is contributed by Asp-350. CBS domains lie at Met-376–Val-436 and Met-437–Tyr-490.

This sequence belongs to the AB hydrolase superfamily. MetX family. Homodimer.

The protein localises to the cytoplasm. The catalysed reaction is L-homoserine + acetyl-CoA = O-acetyl-L-homoserine + CoA. It functions in the pathway amino-acid biosynthesis; L-methionine biosynthesis via de novo pathway; O-acetyl-L-homoserine from L-homoserine: step 1/1. In terms of biological role, transfers an acetyl group from acetyl-CoA to L-homoserine, forming acetyl-L-homoserine. This Methanobrevibacter ruminantium (strain ATCC 35063 / DSM 1093 / JCM 13430 / OCM 146 / M1) (Methanobacterium ruminantium) protein is Homoserine O-acetyltransferase.